A 777-amino-acid chain; its full sequence is Lon protease (777 aa).

Residues 11–204 form the Lon N-terminal domain; it reads IPVLPLRDVV…FLMAIMESEI (194 aa). 356 to 363 provides a ligand contact to ATP; sequence GPPGVGKT. A Lon proteolytic domain is found at 592-773; it reads TNQIGQVIGL…EEVLKLSLEK (182 aa). Residues Ser-679 and Lys-722 contribute to the active site.

Belongs to the peptidase S16 family. Homohexamer. Organized in a ring with a central cavity.

The protein localises to the cytoplasm. It catalyses the reaction Hydrolysis of proteins in presence of ATP.. Functionally, ATP-dependent serine protease that mediates the selective degradation of mutant and abnormal proteins as well as certain short-lived regulatory proteins. Required for cellular homeostasis and for survival from DNA damage and developmental changes induced by stress. Degrades polypeptides processively to yield small peptide fragments that are 5 to 10 amino acids long. Binds to DNA in a double-stranded, site-specific manner. This chain is Lon protease, found in Buchnera aphidicola subsp. Acyrthosiphon pisum (strain APS) (Acyrthosiphon pisum symbiotic bacterium).